Here is a 191-residue protein sequence, read N- to C-terminus: MKITGISGSPRKGQNCEKIIGAALEVAKERGFETDTVFISNEEVAPCKACGACRDQDFCVIDDDMDEIYEKMRAADGIIVAAPVYMGNYPAQLKALFDRSVLLRRKNFALKNKVGAALSVGGSRNGGQEKTIQSIHDWMHIHGMIVVGDNSHFGGITWNPAEEDTVGMQTVSETAKKLCDVLELIQKNRDK.

Cysteine 47, cysteine 50, cysteine 53, and cysteine 59 together coordinate [4Fe-4S] cluster.

This sequence belongs to the SsuE family. Isf subfamily. In terms of assembly, homodimer. FMN serves as cofactor. The cofactor is [4Fe-4S] cluster.

Its function is as follows. Redox-active protein probably involved in electron transport during fermentation of acetate to methane. The chain is Iron-sulfur flavoprotein (isf) from Methanosarcina thermophila.